The following is a 420-amino-acid chain: 2',3'-cyclic-nucleotide 3'-phosphodiesterase (420 aa).

A Phosphoserine modification is found at Ser9. Residue Tyr110 is modified to Phosphotyrosine. 3 positions are modified to phosphoserine: Ser169, Ser227, and Ser239. His250 functions as the Proton acceptor in the catalytic mechanism. Thr252 serves as a coordination point for substrate. Thr262 carries the post-translational modification Phosphothreonine. The active-site Proton donor is His329. Thr331 lines the substrate pocket. Ser358 carries the post-translational modification Phosphoserine. Residue Cys417 is modified to Cysteine methyl ester. Residue Cys417 is the site of S-farnesyl cysteine attachment. Residues 418–420 (TII) constitute a propeptide, removed in mature form.

Belongs to the 2H phosphoesterase superfamily. CNPase family. Exists as monomers and homodimers.

The protein localises to the membrane. It localises to the melanosome. It carries out the reaction a nucleoside 2',3'-cyclic phosphate + H2O = a nucleoside 2'-phosphate + H(+). Functionally, catalyzes the formation of 2'-nucleotide products from 2',3'-cyclic substrates. May participate in RNA metabolism in the myelinating cell, CNP is the third most abundant protein in central nervous system myelin. This is 2',3'-cyclic-nucleotide 3'-phosphodiesterase from Rattus norvegicus (Rat).